The sequence spans 421 residues: Tubulin gamma-3 chain (421 aa).

Residue 94–100 coordinates GTP; it reads AGGTGSG.

The protein belongs to the tubulin family.

It is found in the cytoplasm. The protein resides in the cytoskeleton. The protein localises to the microtubule organizing center. Tubulin is the major constituent of microtubules. The gamma chain is found at microtubule organizing centers (MTOC) such as the spindle poles, suggesting that it is involved in the minus-end nucleation of microtubule assembly. The chain is Tubulin gamma-3 chain (TUBG3) from Zea mays (Maize).